The primary structure comprises 295 residues: Ent-pimara-9(11),15-diene synthase (295 aa).

The protein belongs to the terpene synthase family. As to quaternary structure, monomer. The cofactor is a divalent metal cation.

The enzyme catalyses ent-copalyl diphosphate = ent-pimara-9(11),15-diene + diphosphate. Its pathway is antibiotic biosynthesis. Functionally, involved in viguiepinol biosynthesis. Catalyzes the conversion of copalyl diphosphate (ent-CDP) into pimara-9(11),15-diene (PMD). The chain is Ent-pimara-9(11),15-diene synthase from Streptomyces sp. (strain KO-3988).